The following is a 266-amino-acid chain: Lipooligosaccharide biosynthesis protein lic2B (266 aa).

It belongs to the glycosyltransferase 25 family.

Functionally, involved in extracellular lipooligosaccharide (LOS) biosynthesis and virulence expression. Involved in the synthesis of the oligosaccharide moiety of the LOS molecule by adding GalNAc. The polypeptide is Lipooligosaccharide biosynthesis protein lic2B (lic2B) (Haemophilus influenzae).